The following is a 370-amino-acid chain: Holliday junction branch migration complex subunit RuvB 2 (370 aa).

Residues 1 to 54 form a disordered region; it reads MAIISSRAAGAEDPGQRQQKSSARRRESKLAFARAEGLLQPQAHPSEAQEESLR. The large ATPase domain (RuvB-L) stretch occupies residues 13-214; it reads DPGQRQQKSS…FGQVQRLRFY (202 aa). Residues Leu-53, Arg-54, Gly-95, Lys-98, Thr-99, Thr-100, 161-163, Arg-204, Tyr-214, and Arg-251 each bind ATP; that span reads EDF. Thr-99 serves as a coordination point for Mg(2+). Positions 215–285 are small ATPAse domain (RuvB-S); sequence EPHELAEIVL…VAAAALELFQ (71 aa). The segment at 288-370 is head domain (RuvB-H); it reads PMGLDWTDRK…TAQSPLPVWS (83 aa). The DNA site is built by Arg-343 and Arg-348.

This sequence belongs to the RuvB family. Homohexamer. Forms an RuvA(8)-RuvB(12)-Holliday junction (HJ) complex. HJ DNA is sandwiched between 2 RuvA tetramers; dsDNA enters through RuvA and exits via RuvB. An RuvB hexamer assembles on each DNA strand where it exits the tetramer. Each RuvB hexamer is contacted by two RuvA subunits (via domain III) on 2 adjacent RuvB subunits; this complex drives branch migration. In the full resolvosome a probable DNA-RuvA(4)-RuvB(12)-RuvC(2) complex forms which resolves the HJ.

Its subcellular location is the cytoplasm. It catalyses the reaction ATP + H2O = ADP + phosphate + H(+). In terms of biological role, the RuvA-RuvB-RuvC complex processes Holliday junction (HJ) DNA during genetic recombination and DNA repair, while the RuvA-RuvB complex plays an important role in the rescue of blocked DNA replication forks via replication fork reversal (RFR). RuvA specifically binds to HJ cruciform DNA, conferring on it an open structure. The RuvB hexamer acts as an ATP-dependent pump, pulling dsDNA into and through the RuvAB complex. RuvB forms 2 homohexamers on either side of HJ DNA bound by 1 or 2 RuvA tetramers; 4 subunits per hexamer contact DNA at a time. Coordinated motions by a converter formed by DNA-disengaged RuvB subunits stimulates ATP hydrolysis and nucleotide exchange. Immobilization of the converter enables RuvB to convert the ATP-contained energy into a lever motion, pulling 2 nucleotides of DNA out of the RuvA tetramer per ATP hydrolyzed, thus driving DNA branch migration. The RuvB motors rotate together with the DNA substrate, which together with the progressing nucleotide cycle form the mechanistic basis for DNA recombination by continuous HJ branch migration. Branch migration allows RuvC to scan DNA until it finds its consensus sequence, where it cleaves and resolves cruciform DNA. This is Holliday junction branch migration complex subunit RuvB 2 from Synechococcus sp. (strain JA-3-3Ab) (Cyanobacteria bacterium Yellowstone A-Prime).